The chain runs to 802 residues: MSFNHQEIEKKWQAYWEENKTFRTPDETDKPKFYALDMFPYPSGAGLHVGHPEGYTATDILSRMKRMQGYNVLHPMGWDAFGLPAEQYALDTGNSPAEFTEKNINTFRNQIKSLGFSYDWDREVNTTDPNYYKWTQWIFLKLFEKGLAYVDEIPVNWCPALGTVLANEEVIDGKSERGGHPVERRPMKQWMLKITAYADRLLEDLDELDWPESLKDMQRNWIGRSEGAEVHFNIDGTDKKFTIFTTRPDTLFGATYCVLAPEHALVAEITTEDQKGAVEAYIDVVKSKSDLERTELAKEKTGVFTGAYAINPVNGEKLPIWIADYVLASYGTGAVMAVPAHDERDYEFAKTFDLPMKEVVKGGDITKEAYTADGEHIDSAFLNGLNKEEAIAKMIEWLEVTGAGNQKVTYRLRDWLFSRQRYWGEPIPIIHWEDGTMTAVKEEELPLVLPKTDNIRPSGTGESPLANIDEWVNVVDPETGKKGRRETNTMPQWAGSCWYYLRYIDPNNNEALVDPEKAKQWLPVDIYIGGAEHAVLHLLYARFWHKVLYDIGVVPTKEPFQQLFNQGMILGENNEKMSKSKGNVVNPDDIVASHGADTLRLYEMFMGPLDASIAWSENGLDGARRFLDRVWRLFVQENGELSEKITDAPNKELEKAYHQTVKKVTEDYEELHFNTAISQMMMFINDAYKAETLPKEYVEGFVKLLAPVAPHIAEELWSKLGYNETITYASWPTFDESKLVEDEVEIVVQVMGKVRAKLKMKKDASKEEMEQLALEEVKEQIEGKTVRKVIVVPGKLVNIVAN.

Positions 40–51 (PYPSGAGLHVGH) match the 'HIGH' region motif. A 'KMSKS' region motif is present at residues 576-580 (KMSKS). Position 579 (K579) interacts with ATP.

Belongs to the class-I aminoacyl-tRNA synthetase family.

The protein resides in the cytoplasm. The catalysed reaction is tRNA(Leu) + L-leucine + ATP = L-leucyl-tRNA(Leu) + AMP + diphosphate. The chain is Leucine--tRNA ligase from Bacillus cytotoxicus (strain DSM 22905 / CIP 110041 / 391-98 / NVH 391-98).